Here is a 690-residue protein sequence, read N- to C-terminus: Eukaryotic translation initiation factor 3 subunit B (690 aa).

Positions 1–11 (MAKKKSEEHSG) are enriched in basic and acidic residues. Positions 1-33 (MAKKKSEEHSGADANDSDYNEEPNFDDPPGYVD) are disordered. The span at 15–25 (NDSDYNEEPNF) shows a compositional bias: acidic residues. Positions 57-141 (SVVVVDNMPK…YTFAVNLFTD (85 aa)) constitute an RRM domain. 5 WD repeats span residues 207-246 (TRER…KIQK), 292-331 (GDGM…LLDL), 334-369 (IKIA…TLME), 442-484 (EIRE…KPSL), and 530-575 (PDHF…IRRT). A coiled-coil region spans residues 613–646 (EQKDRLRLTRASKELLEKRAQLRETFMEYRNKRI).

The protein belongs to the eIF-3 subunit B family. In terms of assembly, component of the eukaryotic translation initiation factor 3 (eIF-3) complex. The eIF-3 complex interacts with pix. Interacts with mxt.

It localises to the cytoplasm. In terms of biological role, RNA-binding component of the eukaryotic translation initiation factor 3 (eIF-3) complex, which is involved in protein synthesis of a specialized repertoire of mRNAs and, together with other initiation factors, stimulates binding of mRNA and methionyl-tRNAi to the 40S ribosome. The eIF-3 complex specifically targets and initiates translation of a subset of mRNAs involved in cell proliferation. This is Eukaryotic translation initiation factor 3 subunit B from Drosophila mojavensis (Fruit fly).